The following is a 610-amino-acid chain: Elongation factor 4 (610 aa).

Residues 11–193 enclose the tr-type G domain; it reads QRIRNFSIVA…KIVQDIPAPT (183 aa). GTP contacts are provided by residues 23–28 and 140–143; these read DHGKST and NKVD.

The protein belongs to the TRAFAC class translation factor GTPase superfamily. Classic translation factor GTPase family. LepA subfamily.

The protein localises to the cell membrane. The enzyme catalyses GTP + H2O = GDP + phosphate + H(+). Functionally, required for accurate and efficient protein synthesis under certain stress conditions. May act as a fidelity factor of the translation reaction, by catalyzing a one-codon backward translocation of tRNAs on improperly translocated ribosomes. Back-translocation proceeds from a post-translocation (POST) complex to a pre-translocation (PRE) complex, thus giving elongation factor G a second chance to translocate the tRNAs correctly. Binds to ribosomes in a GTP-dependent manner. In Limosilactobacillus fermentum (strain NBRC 3956 / LMG 18251) (Lactobacillus fermentum), this protein is Elongation factor 4.